Here is a 222-residue protein sequence, read N- to C-terminus: Large ribosomal subunit protein uL4 (222 aa).

A disordered region spans residues 50–72 (TRGRSEVSHSTKKPFRQKGTGNA).

The protein belongs to the universal ribosomal protein uL4 family. As to quaternary structure, part of the 50S ribosomal subunit.

One of the primary rRNA binding proteins, this protein initially binds near the 5'-end of the 23S rRNA. It is important during the early stages of 50S assembly. It makes multiple contacts with different domains of the 23S rRNA in the assembled 50S subunit and ribosome. In terms of biological role, forms part of the polypeptide exit tunnel. In Chlamydia trachomatis serovar A (strain ATCC VR-571B / DSM 19440 / HAR-13), this protein is Large ribosomal subunit protein uL4.